Here is a 338-residue protein sequence, read N- to C-terminus: MNVYYDKDCDLSIVQGKKVAIIGYGSQGHAHALNLQDSNVDVTVGLRANSGSWKKAENAGLKVAEVEEAVKAADIIMILTPDEFQKELYNDVIEPNIKQGATLAFAHGFAIHYNQVIPRSDLDVIMVAPKAPGHTVRSEFAKGGGIPDLIAIYQDASGQAKQLALSYAAGVGGGRSGIIETTFKDETETDLFGEQAVLCGGAVELVKMGFETLTEAGYAPEMAYFECLHELKLIVDLMYEGGIADMNYSISNNAEYGEYVTGPEVINEQSREAMRNALKRIQSGEYAKMFISEGATNYPSMTARRRNNAEHQIEITGAKLRGMMPWIGGNKIIDKDKN.

The KARI N-terminal Rossmann domain occupies 1-181 (MNVYYDKDCD…GGGRSGIIET (181 aa)). NADP(+)-binding positions include 24-27 (YGSQ), Arg-47, Ser-50, Ser-52, and 82-85 (DEFQ). The active site involves His-107. NADP(+) is bound at residue Gly-133. The region spanning 182-327 (TFKDETETDL…AKLRGMMPWI (146 aa)) is the KARI C-terminal knotted domain. Mg(2+) is bound by residues Asp-190, Glu-194, Glu-226, and Glu-230. Position 251 (Ser-251) interacts with substrate.

This sequence belongs to the ketol-acid reductoisomerase family. It depends on Mg(2+) as a cofactor.

The catalysed reaction is (2R)-2,3-dihydroxy-3-methylbutanoate + NADP(+) = (2S)-2-acetolactate + NADPH + H(+). The enzyme catalyses (2R,3R)-2,3-dihydroxy-3-methylpentanoate + NADP(+) = (S)-2-ethyl-2-hydroxy-3-oxobutanoate + NADPH + H(+). It participates in amino-acid biosynthesis; L-isoleucine biosynthesis; L-isoleucine from 2-oxobutanoate: step 2/4. It functions in the pathway amino-acid biosynthesis; L-valine biosynthesis; L-valine from pyruvate: step 2/4. In terms of biological role, involved in the biosynthesis of branched-chain amino acids (BCAA). Catalyzes an alkyl-migration followed by a ketol-acid reduction of (S)-2-acetolactate (S2AL) to yield (R)-2,3-dihydroxy-isovalerate. In the isomerase reaction, S2AL is rearranged via a Mg-dependent methyl migration to produce 3-hydroxy-3-methyl-2-ketobutyrate (HMKB). In the reductase reaction, this 2-ketoacid undergoes a metal-dependent reduction by NADPH to yield (R)-2,3-dihydroxy-isovalerate. This chain is Ketol-acid reductoisomerase (NADP(+)), found in Psychrobacter cryohalolentis (strain ATCC BAA-1226 / DSM 17306 / VKM B-2378 / K5).